We begin with the raw amino-acid sequence, 217 residues long: Somatotropin (217 aa).

An N-terminal signal peptide occupies residues 1-26 (MAPGSRTSLLLAFGLLCLPWLQEGSA). His44 contributes to the Zn(2+) binding site. Cys79 and Cys191 form a disulfide bridge. A Phosphoserine modification is found at Ser132. Residue Glu200 participates in Zn(2+) binding. An intrachain disulfide couples Cys208 to Cys215.

Belongs to the somatotropin/prolactin family.

It localises to the secreted. Its function is as follows. Plays an important role in growth control. Its major role in stimulating body growth is to stimulate the liver and other tissues to secrete IGF1. It stimulates both the differentiation and proliferation of myoblasts. It also stimulates amino acid uptake and protein synthesis in muscle and other tissues. The chain is Somatotropin (GH1) from Pan troglodytes (Chimpanzee).